Consider the following 234-residue polypeptide: Urease accessory protein UreF (234 aa).

It belongs to the UreF family. As to quaternary structure, ureD, UreF and UreG form a complex that acts as a GTP-hydrolysis-dependent molecular chaperone, activating the urease apoprotein by helping to assemble the nickel containing metallocenter of UreC. The UreE protein probably delivers the nickel.

The protein localises to the cytoplasm. Its function is as follows. Required for maturation of urease via the functional incorporation of the urease nickel metallocenter. The sequence is that of Urease accessory protein UreF from Azoarcus sp. (strain BH72).